The primary structure comprises 328 residues: Malate dehydrogenase (328 aa).

11–17 (GAAGQIG) serves as a coordination point for NAD(+). Substrate is bound by residues R94 and R100. NAD(+) contacts are provided by residues N107, Q114, and 131–133 (VGN). Substrate contacts are provided by N133 and R164. H189 (proton acceptor) is an active-site residue.

This sequence belongs to the LDH/MDH superfamily. MDH type 2 family.

The catalysed reaction is (S)-malate + NAD(+) = oxaloacetate + NADH + H(+). In terms of biological role, catalyzes the reversible oxidation of malate to oxaloacetate. In Acinetobacter baylyi (strain ATCC 33305 / BD413 / ADP1), this protein is Malate dehydrogenase.